The following is a 178-amino-acid chain: Protein PilI (178 aa).

The 140-residue stretch at 34–173 folds into the CheW-like domain; that stretch reads SWSGIGFRMG…PHALAQHQGF (140 aa).

Its function is as follows. May be a part of a signal-transduction system that regulates twitching motility by controlling pilus function (extension and retraction). This Pseudomonas aeruginosa (strain ATCC 15692 / DSM 22644 / CIP 104116 / JCM 14847 / LMG 12228 / 1C / PRS 101 / PAO1) protein is Protein PilI (pilI).